Reading from the N-terminus, the 258-residue chain is Tryptophan synthase alpha chain (258 aa).

Active-site proton acceptor residues include glutamate 47 and aspartate 58.

This sequence belongs to the TrpA family. In terms of assembly, tetramer of two alpha and two beta chains.

The catalysed reaction is (1S,2R)-1-C-(indol-3-yl)glycerol 3-phosphate + L-serine = D-glyceraldehyde 3-phosphate + L-tryptophan + H2O. It functions in the pathway amino-acid biosynthesis; L-tryptophan biosynthesis; L-tryptophan from chorismate: step 5/5. Functionally, the alpha subunit is responsible for the aldol cleavage of indoleglycerol phosphate to indole and glyceraldehyde 3-phosphate. This is Tryptophan synthase alpha chain from Bacillus cereus (strain ZK / E33L).